Consider the following 63-residue polypeptide: Sec-independent protein translocase protein TatA (63 aa).

A helical membrane pass occupies residues 1 to 21 (MGGLSVGSVVLIALVALLIFG).

Belongs to the TatA/E family. In terms of assembly, forms a complex with TatC.

The protein localises to the cell membrane. In terms of biological role, part of the twin-arginine translocation (Tat) system that transports large folded proteins containing a characteristic twin-arginine motif in their signal peptide across membranes. TatA could form the protein-conducting channel of the Tat system. The polypeptide is Sec-independent protein translocase protein TatA (Shouchella clausii (strain KSM-K16) (Alkalihalobacillus clausii)).